Here is a 367-residue protein sequence, read N- to C-terminus: tRNA-specific 2-thiouridylase MnmA (367 aa).

Residues 13 to 20 (GLSGGVDS) and Met39 contribute to the ATP site. The interval 99–101 (NPD) is interaction with target base in tRNA. Cys104 acts as the Nucleophile in catalysis. Cys104 and Cys200 form a disulfide bridge. Gly128 provides a ligand contact to ATP. The segment at 150 to 152 (KDQ) is interaction with tRNA. The active-site Cysteine persulfide intermediate is Cys200. Residues 307–308 (RY) form an interaction with tRNA region.

It belongs to the MnmA/TRMU family.

It is found in the cytoplasm. It carries out the reaction S-sulfanyl-L-cysteinyl-[protein] + uridine(34) in tRNA + AH2 + ATP = 2-thiouridine(34) in tRNA + L-cysteinyl-[protein] + A + AMP + diphosphate + H(+). In terms of biological role, catalyzes the 2-thiolation of uridine at the wobble position (U34) of tRNA, leading to the formation of s(2)U34. In Neisseria meningitidis serogroup C / serotype 2a (strain ATCC 700532 / DSM 15464 / FAM18), this protein is tRNA-specific 2-thiouridylase MnmA.